Reading from the N-terminus, the 389-residue chain is STE20-related kinase adapter protein alpha (389 aa).

The 311-residue stretch at 11 to 321 (YELLTIIGRG…AGALLNHPFF (311 aa)) folds into the Protein kinase domain.

The protein belongs to the protein kinase superfamily. STE Ser/Thr protein kinase family. STE20 subfamily. In terms of assembly, component of a trimeric complex composed of STK11/LKB1, STRAD (STRADA or STRADB) and CAB39/MO25 (CAB39/MO25alpha or CAB39L/MO25beta): the complex tethers STK11/LKB1 in the cytoplasm and stimulates its catalytic activity. Expressed in brain, hypothalamus, heart and skeletal muscle.

The protein localises to the nucleus. Its subcellular location is the cytoplasm. Its function is as follows. Pseudokinase which, in complex with CAB39/MO25 (CAB39/MO25alpha or CAB39L/MO25beta), binds to and activates STK11/LKB1. Adopts a closed conformation typical of active protein kinases and binds STK11/LKB1 as a pseudosubstrate, promoting conformational change of STK11/LKB1 in an active conformation. The protein is STE20-related kinase adapter protein alpha (STRADA) of Gallus gallus (Chicken).